Consider the following 534-residue polypeptide: Lysophosphatidylcholine acyltransferase 1 (534 aa).

The interval 1–22 is disordered; that stretch reads MRLRGCGPRAAPASSAGASDAR. Residues 1-57 are Cytoplasmic-facing; that stretch reads MRLRGCGPRAAPASSAGASDARLLAPPGRNPFVHELRLSALQKAQVALMTLTLFPVR. The span at 7-22 shows a compositional bias: low complexity; that stretch reads GPRAAPASSAGASDAR. Residues 58 to 78 traverse the membrane as a helical; Signal-anchor for type II membrane protein segment; that stretch reads LLVAAAMMLLAWPLALVASLG. The Lumenal portion of the chain corresponds to 79–534; the sequence is SAEKEPEQPP…GRKPVRKKLD (456 aa). Positions 135–140 match the HXXXXD motif motif; it reads HSSYFD. 2 consecutive EF-hand domains span residues 379–414 and 451–486; these read PVSD…VCRP and VAEL…YPAF. The Ca(2+) site is built by Asp-392, Ser-394, Ser-396, Glu-398, and Glu-403. Residues 512-534 are disordered; the sequence is GFCADFSPENSDAGRKPVRKKLD. Residues 523–534 show a composition bias toward basic and acidic residues; that stretch reads DAGRKPVRKKLD. A Di-lysine motif motif is present at residues 531–534; it reads KKLD.

This sequence belongs to the 1-acyl-sn-glycerol-3-phosphate acyltransferase family. As to expression, erythrocytes.

The protein localises to the endoplasmic reticulum membrane. The protein resides in the golgi apparatus membrane. It localises to the cell membrane. It is found in the lipid droplet. The enzyme catalyses a 1-acyl-sn-glycero-3-phosphocholine + an acyl-CoA = a 1,2-diacyl-sn-glycero-3-phosphocholine + CoA. It catalyses the reaction a 1-acyl-sn-glycero-3-phosphate + an acyl-CoA = a 1,2-diacyl-sn-glycero-3-phosphate + CoA. It carries out the reaction a 1-O-alkyl-sn-glycero-3-phosphocholine + acetyl-CoA = a 1-O-alkyl-2-acetyl-sn-glycero-3-phosphocholine + CoA. The catalysed reaction is a 1-O-(1Z-alkenyl)-sn-glycero-3-phosphocholine + an acyl-CoA = a 1-O-(1Z-alkenyl)-2-acyl-sn-glycero-3-phosphocholine + CoA. The enzyme catalyses 1-acyl-sn-glycero-3-phospho-(1'-sn-glycerol) + an acyl-CoA = a 1,2-diacyl-sn-glycero-3-phospho-(1'-sn-glycerol) + CoA. It catalyses the reaction 1-hexadecanoyl-sn-glycero-3-phosphocholine + (9Z)-octadecenoyl-CoA = 1-hexadecanoyl-2-(9Z-octadecenoyl)-sn-glycero-3-phosphocholine + CoA. It carries out the reaction 1-hexadecanoyl-sn-glycero-3-phosphocholine + hexadecanoyl-CoA = 1,2-dihexadecanoyl-sn-glycero-3-phosphocholine + CoA. The catalysed reaction is 1-O-hexadecyl-sn-glycero-3-phosphocholine + hexadecanoyl-CoA = 1-O-hexadecyl-2-hexadecanoyl-sn-glycero-3-phosphocholine + CoA. The enzyme catalyses a 1-O-(1Z-alkenyl)-sn-glycero-3-phosphocholine + hexadecanoyl-CoA = 1-O-(1Z)-alkenyl-2-hexadecanoyl-sn-glycero-3-phosphocholine + CoA. It catalyses the reaction 1-hexadecanoyl-sn-glycero-3-phospho-(1'-sn-glycerol) + hexadecanoyl-CoA = 1,2-dihexadecanoyl-sn-glycero-3-phospho-(1'-sn-glycerol) + CoA. It carries out the reaction 1-dodecanoyl-sn-glycero-3-phosphocholine + hexadecanoyl-CoA = 1-dodecanoyl-2-hexadecanoyl-sn-glycero-3-phosphocholine + CoA. The catalysed reaction is 1-tetradecanoyl-sn-glycero-3-phosphocholine + hexadecanoyl-CoA = 1-tetradecanoyl-2-hexadecanoyl-sn-glycero-3-phosphocholine + CoA. The enzyme catalyses 1-O-octadecyl-sn-glycero-3-phosphocholine + hexadecanoyl-CoA = 1-O-octadecyl-2-hexadecanoyl-sn-glycero-3-phosphocholine + CoA. It catalyses the reaction 1-octadecanoyl-sn-glycero-3-phosphocholine + hexadecanoyl-CoA = 1-octadecanoyl-2-hexadecanoyl-sn-glycero-3-phosphocholine + CoA. It carries out the reaction 1-(9Z-octadecenoyl)-sn-glycero-3-phosphocholine + hexadecanoyl-CoA = 1-(9Z-octadecenoyl)-2-hexadecanoyl-sn-glycero-3-phosphocholine + CoA. The catalysed reaction is 1-eicosanoyl-sn-glycero-3-phosphocholine + hexadecanoyl-CoA = 1-eicosanoyl-2-hexadecanoyl-sn-glycero-3-phosphocholine + CoA. The enzyme catalyses hexanoyl-CoA + 1-hexadecanoyl-sn-glycero-3-phosphocholine = 1-hexadecanoyl-2-hexanoyl-sn-glycero-3-phosphocholine + CoA. It catalyses the reaction octanoyl-CoA + 1-hexadecanoyl-sn-glycero-3-phosphocholine = 1-hexadecanoyl-2-octanoyl-sn-glycero-3-phosphocholine + CoA. It carries out the reaction decanoyl-CoA + 1-hexadecanoyl-sn-glycero-3-phosphocholine = 1-hexadecanoyl-2-decanoyl-sn-glycero-3-phosphocholine + CoA. The catalysed reaction is dodecanoyl-CoA + 1-hexadecanoyl-sn-glycero-3-phosphocholine = 1-hexadecanoyl-2-dodecanoyl-sn-glycero-3-phosphocholine + CoA. The enzyme catalyses tetradecanoyl-CoA + 1-hexadecanoyl-sn-glycero-3-phosphocholine = 1-hexadecanoyl-2-tetradecanoyl-sn-glycero-3-phosphocholine + CoA. It catalyses the reaction (9Z,12Z)-octadecadienoyl-CoA + 1-hexadecanoyl-sn-glycero-3-phosphocholine = 1-hexadecanoyl-2-(9Z,12Z-octadecadienoyl)-sn-glycero-3-phosphocholine + CoA. It carries out the reaction (4Z,7Z,10Z,13Z,16Z,19Z)-docosahexaenoyl-CoA + 1-hexadecanoyl-sn-glycero-3-phosphocholine = 1-hexadecanoyl-2-(4Z,7Z,10Z,13Z,16Z,19Z-docosahexaenoyl)-sn-glycero-3-phosphocholine + CoA. The catalysed reaction is 1-hexadecanoyl-sn-glycero-3-phosphocholine + acetyl-CoA = 1-hexadecanoyl-2-acetyl-sn-glycero-3-phosphocholine + CoA. The enzyme catalyses eicosanoyl-CoA + 1-hexadecanoyl-sn-glycero-3-phosphocholine = 1-hexadecanoyl-2-eicosanoyl-sn-glycero-3-phosphocholine + CoA. It catalyses the reaction 1-O-hexadecyl-sn-glycero-3-phosphocholine + acetyl-CoA = 1-O-hexadecyl-2-acetyl-sn-glycero-3-phosphocholine + CoA. It carries out the reaction a 1-acyl-sn-glycero-3-phosphocholine + hexadecanoyl-CoA = 1-acyl-2-hexadecanoyl-sn-glycero-3-phosphocholine + CoA. The catalysed reaction is a 1-acyl-sn-glycero-3-phosphate + hexadecanoyl-CoA = 1-acyl-2-hexadecanoyl-sn-glycero-3-phosphate + CoA. The enzyme catalyses 1-acyl-sn-glycero-3-phospho-(1'-sn-glycerol) + hexadecanoyl-CoA = 1-acyl-2-hexadecanoyl-sn-glycero-3-phospho-(1'-sn-glycerol) + CoA. Its pathway is lipid metabolism; phospholipid metabolism. Exhibits acyltransferase activity. Exhibits acetyltransferase activity. Activity is calcium-independent. Catalyzes the conversion of lysophosphatidylcholine (1-acyl-sn-glycero-3-phosphocholine or LPC) into phosphatidylcholine (1,2-diacyl-sn-glycero-3-phosphocholine or PC). Catalyzes the conversion 1-acyl-sn-glycerol-3-phosphate (lysophosphatidic acid or LPA) into 1,2-diacyl-sn-glycerol-3-phosphate (phosphatidic acid or PA) by incorporating an acyl moiety at the sn-2 position of the glycerol backbone. Displays a clear preference for saturated fatty acyl-CoAs, and 1-myristoyl or 1-palmitoyl LPC as acyl donors and acceptors, respectively. Involved in platelet-activating factor (PAF) biosynthesis by catalyzing the conversion of the PAF precursor, 1-O-alkyl-sn-glycero-3-phosphocholine (lyso-PAF) into 1-O-alkyl-2-acetyl-sn-glycero-3-phosphocholine (PAF). May synthesize phosphatidylcholine in pulmonary surfactant, thereby playing a pivotal role in respiratory physiology. Involved in the regulation of lipid droplet number and size. The sequence is that of Lysophosphatidylcholine acyltransferase 1 (LPCAT1) from Homo sapiens (Human).